Here is a 314-residue protein sequence, read N- to C-terminus: Homeobox protein DBX1-A (314 aa).

Residues 175 to 234 (GMLRRAVFSDVQRKALEKMFQKQKYISKPDRKKLAAKLGLKDSQVKIWFQNRRMKWRNSK) constitute a DNA-binding region (homeobox). Disordered stretches follow at residues 234–279 (KERE…CAPS) and 292–314 (STDSSITFKHSDFSESEDEITVS). Over residues 258-267 (DLSDVGKKSS) the composition is skewed to basic and acidic residues. Over residues 305 to 314 (SESEDEITVS) the composition is skewed to acidic residues.

Belongs to the H2.0 homeobox family.

The protein localises to the nucleus. This Danio rerio (Zebrafish) protein is Homeobox protein DBX1-A (dbx1a).